The primary structure comprises 255 residues: F-box only protein 44 (255 aa).

In terms of domain architecture, F-box spans 3-50; the sequence is VGNINELPENILLELFTHVPARQLLLNCRLVCSLWRDLIDLVTLWKRK. One can recognise an FBA domain in the interval 71 to 252; the sequence is FYFLRSLHRN…VTNSSITIGP (182 aa).

In terms of assembly, part of a SCF (SKP1-cullin-F-box) protein ligase complex. Interacts with SKP1 and CUL1. As to expression, abundantly expressed in brain and kidney. Expressed at lower levels in heart, spleen and liver.

In terms of biological role, substrate-recognition component of the SCF (SKP1-CUL1-F-box protein)-type E3 ubiquitin ligase complex. The chain is F-box only protein 44 (FBXO44) from Homo sapiens (Human).